The sequence spans 1318 residues: Meiotically up-regulated gene 79 protein (1318 aa).

Disordered stretches follow at residues 177-198 (PVNSHPSQSMFGNGVRASSGSY), 208-227 (EEELPSSKKRQRTPPPIVVT), and 360-387 (PQALAAAESPTTKAPTTKAPTSEAPPKG). Positions 364 to 384 (AAAESPTTKAPTTKAPTSEAP) are enriched in low complexity. Residues 1049–1158 (MISYKKMVLS…WIHSLNFNAA (110 aa)) enclose the PH domain.

Its subcellular location is the nucleus. Appears to have a role in sporulation. This chain is Meiotically up-regulated gene 79 protein (mug79), found in Schizosaccharomyces pombe (strain 972 / ATCC 24843) (Fission yeast).